Reading from the N-terminus, the 530-residue chain is uncharacterized protein (530 aa).

2 stretches are compositionally biased toward polar residues: residues 60-74 (LNES…SSTP) and 92-103 (GQGTSRPLPTLS). Disordered stretches follow at residues 60-103 (LNES…PTLS) and 121-155 (ASST…GLGN). Over residues 131–142 (PDPRDAPREGSF) the composition is skewed to basic and acidic residues.

This is an uncharacterized protein from Mus musculus (Mouse).